We begin with the raw amino-acid sequence, 385 residues long: Spermidine/putrescine import ATP-binding protein PotA (385 aa).

The 233-residue stretch at 6 to 238 (IEFKNVSKVF…PINHFVATFI (233 aa)) folds into the ABC transporter domain. 40–47 (GASGSGKS) is a binding site for ATP.

It belongs to the ABC transporter superfamily. Spermidine/putrescine importer (TC 3.A.1.11.1) family. As to quaternary structure, the complex is composed of two ATP-binding proteins (PotA), two transmembrane proteins (PotB and PotC) and a solute-binding protein (PotD).

It is found in the cell membrane. The enzyme catalyses ATP + H2O + polyamine-[polyamine-binding protein]Side 1 = ADP + phosphate + polyamineSide 2 + [polyamine-binding protein]Side 1.. Part of the ABC transporter complex PotABCD involved in spermidine/putrescine import. Responsible for energy coupling to the transport system. The polypeptide is Spermidine/putrescine import ATP-binding protein PotA (Streptococcus pneumoniae serotype 4 (strain ATCC BAA-334 / TIGR4)).